A 250-amino-acid polypeptide reads, in one-letter code: Eukaryotic translation initiation factor 3 subunit K (250 aa).

One can recognise a PCI domain in the interval Phe46–Lys229.

Belongs to the eIF-3 subunit K family. Component of the eukaryotic translation initiation factor 3 (eIF-3) complex.

Its subcellular location is the cytoplasm. Component of the eukaryotic translation initiation factor 3 (eIF-3) complex, which is involved in protein synthesis of a specialized repertoire of mRNAs and, together with other initiation factors, stimulates binding of mRNA and methionyl-tRNAi to the 40S ribosome. The eIF-3 complex specifically targets and initiates translation of a subset of mRNAs involved in cell proliferation. This chain is Eukaryotic translation initiation factor 3 subunit K, found in Emericella nidulans (strain FGSC A4 / ATCC 38163 / CBS 112.46 / NRRL 194 / M139) (Aspergillus nidulans).